Consider the following 340-residue polypeptide: Spike protein P5 (340 aa).

Positions 2 to 122 (ANQQIGGSTV…NFPIALGVWP (121 aa)) are domain-1. A Collagen-like domain is found at 123–141 (SGIKGDKGDPGAPGPAGGT). A domain-2 region spans residues 142–340 (VVVEDSGASF…IINITAAKIN (199 aa)).

In terms of assembly, homotrimer.

Its subcellular location is the virion. Functionally, in association with P31 and P2, forms the spike complexes located at the 5-fold vertices of the capsid. Essential for viral infectivity. The polypeptide is Spike protein P5 (V) (Enterobacteria phage PRD1 (Bacteriophage PRD1)).